We begin with the raw amino-acid sequence, 521 residues long: Myocyte-specific enhancer factor 2D (521 aa).

Positions 3–57 (RKKIQIQRITDERNRQVTFTKRKFGLMKKAYELSVLCDCEIALIIFNHSNKLFQY) constitute an MADS-box domain. The mef2-type DNA-binding region spans 58–86 (ASTDMDKVLLKYTEYNEPHESRTNADIIE). Phosphoserine occurs at positions 98, 106, and 110. Phosphoserine; by PKA is present on S121. Residues 174-207 (TDPRLLSPQQPALQRNSVSPGLPQRPASAGAMLG) form a disordered region. S180 carries the post-translational modification Phosphoserine; by MAPK7. A compositionally biased stretch (polar residues) spans 180–192 (SPQQPALQRNSVS). At S190 the chain carries Phosphoserine; by PKA. Residue S231 is modified to Phosphoserine. The interval 244-266 (NKVIPAKSPPPPTHSTQLGAPSR) is disordered. Position 245 is an N6-acetyllysine (K245). Position 251 is a phosphoserine (S251). A beta domain region spans residues 286–292 (TEDHLDL). 2 disordered regions span residues 357 to 407 (SLGN…QSHL) and 437 to 521 (SIKS…WTLK). Residues 373–400 (PQQPQPPQQQPPQPQQPQPQQPQQPQQP) are compositionally biased toward pro residues. An N6-acetyllysine; alternate modification is found at K439. K439 is covalently cross-linked (Glycyl lysine isopeptide (Lys-Gly) (interchain with G-Cter in SUMO); alternate). S444 is subject to Phosphoserine.

It belongs to the MEF2 family. As to quaternary structure, interacts with MYOG. Forms a complex with class II HDACs in undifferentiating cells. On myogenic differentiation, HDACs are released into the cytoplasm allowing MEF2s to interact with other proteins for activation. Interacts with HDAC4 (in undifferentiating cells); the interaction translocates MEF2D to nuclear dots. Forms a heterodimer with MEF2A. Interacts with MAPK7; the interaction phosphorylates but does not activate MEF2D. Interacts with CCAR2 and HDAC3. Phosphorylated on Ser-444 by CDK5 is required for Lys-439 sumoylation and inhibits transcriptional activity. In neurons, enhanced CDK5 activity induced by neurotoxins promotes caspase 3-mediated cleavage leading to neuron apoptosis. Phosphorylation on Ser-180 can be enhanced by EGF. Phosphorylated and activated by CaMK4. Post-translationally, acetylated on Lys-439 by CREBBP. Acetylated by EP300. Deacetylated by SIRT1 and HDAC3. In terms of processing, sumoylated on Lys-439 with SUMO2 but not SUMO1; which inhibits transcriptional activity and myogenic activity. Desumoylated by SENP3. Proteolytically cleaved in cerebellar granule neurons on several sites by caspase 7 following neurotoxicity. Preferentially cleaves the CDK5-mediated hyperphosphorylated form which leads to neuron apoptosis and transcriptional inactivation.

The protein localises to the nucleus. Transcriptional activator which binds specifically to the MEF2 element, 5'-YTA[AT](4)TAR-3', found in numerous muscle-specific, growth factor- and stress-induced genes. Mediates cellular functions not only in skeletal and cardiac muscle development, but also in neuronal differentiation and survival. Plays diverse roles in the control of cell growth, survival and apoptosis via p38 MAPK signaling in muscle-specific and/or growth factor-related transcription. Plays a critical role in the regulation of neuronal apoptosis. The protein is Myocyte-specific enhancer factor 2D (MEF2D) of Homo sapiens (Human).